A 106-amino-acid polypeptide reads, in one-letter code: 3-phenylpropionate/cinnamic acid dioxygenase ferredoxin subunit (106 aa).

A Rieske domain is found at 4–99 (IYACPVADVP…VHVEGGDIFI (96 aa)). Residues C42, H44, C62, and H65 each coordinate [2Fe-2S] cluster.

It belongs to the bacterial ring-hydroxylating dioxygenase ferredoxin component family. In terms of assembly, this dioxygenase system consists of four proteins: the two subunits of the hydroxylase component (HcaE and HcaF), a ferredoxin (HcaC) and a ferredoxin reductase (HcaD). [2Fe-2S] cluster serves as cofactor.

It participates in aromatic compound metabolism; 3-phenylpropanoate degradation. Functionally, part of the multicomponent 3-phenylpropionate dioxygenase, that converts 3-phenylpropionic acid (PP) and cinnamic acid (CI) into 3-phenylpropionate-dihydrodiol (PP-dihydrodiol) and cinnamic acid-dihydrodiol (CI-dihydrodiol), respectively. This protein seems to be a 2Fe-2S ferredoxin. This Escherichia coli O139:H28 (strain E24377A / ETEC) protein is 3-phenylpropionate/cinnamic acid dioxygenase ferredoxin subunit.